Here is a 266-residue protein sequence, read N- to C-terminus: Undecaprenyl-diphosphatase (266 aa).

8 helical membrane passes run 1-21 (METF…FLPI), 39-59 (QGLS…VIYF), 87-107 (WWII…KDFI), 111-131 (FRNT…LWAA), 144-164 (MGWK…IPGT), 183-203 (AAAR…ALLV), 218-238 (ALGL…HFFL), and 244-264 (IGMT…LGLL).

This sequence belongs to the UppP family.

The protein localises to the cell inner membrane. The enzyme catalyses di-trans,octa-cis-undecaprenyl diphosphate + H2O = di-trans,octa-cis-undecaprenyl phosphate + phosphate + H(+). Functionally, catalyzes the dephosphorylation of undecaprenyl diphosphate (UPP). Confers resistance to bacitracin. This Shewanella frigidimarina (strain NCIMB 400) protein is Undecaprenyl-diphosphatase.